The primary structure comprises 31 residues: Cyclotide hyen-I (31 aa).

A cross-link (cyclopeptide (Gly-Asp)) is located at residues 1-31; the sequence is GSTPCGESCVWIPCISGIVGCSCSNKVCYMD. 3 disulfides stabilise this stretch: cysteine 5–cysteine 21, cysteine 9–cysteine 23, and cysteine 14–cysteine 28.

Post-translationally, this is a cyclic peptide. As to expression, detected in seeds (at protein level).

Probably participates in a plant defense mechanism. In Pigea enneasperma (Spade flower), this protein is Cyclotide hyen-I.